We begin with the raw amino-acid sequence, 369 residues long: Transcription factor GTE6 (369 aa).

One can recognise a Bromo domain in the interval K89–F198. Residues K201–E263 adopt a coiled-coil conformation. The region spanning M250–K331 is the NET domain. Basic and acidic residues predominate over residues K329–E348. The tract at residues K329–I369 is disordered. The Bipartite nuclear localization signal signature appears at K351–R368.

As to expression, abundantly expressed in flowers. Weakly expressed in roots, leaves and siliques; and undetectable in 5-day-old seedlings. In the basal rosette leaves of 21-day-old plants, it is more abundant in leaves 6 and 7, which possess narrow elliptical laminae, than in leaves 1-4, which have round laminae, suggesting a possible correlation between its expression and the formation of elliptical leaf laminae in mature leaves.

Its subcellular location is the nucleus. Functionally, regulates differences in leaf patterning between juvenile and mature leaves by controlling differences in the development of primordia produced during juvenile and mature phases. Acts by activating transcription of the myb-domain protein AS1, a gene involved in leaf-axis specification. Associates with the promoter and the start of the transcribed region of AS1 and up-regulates expression of AS1 through acetylation of histones H3 and H4. The protein is Transcription factor GTE6 (GTE6) of Arabidopsis thaliana (Mouse-ear cress).